Reading from the N-terminus, the 674-residue chain is Sodium/myo-inositol cotransporter 2 (674 aa).

Topologically, residues 1-25 (MESSASSPPLTQSDPLEAFPRRTLE) are extracellular. Residues 26 to 46 (AGDIAVLVLYFLFVLAVGLWS) form a helical membrane-spanning segment. At 47 to 56 (TVKTKRDTVK) the chain is on the cytoplasmic side. A helical membrane pass occupies residues 57 to 77 (GYFLAGGNMLWWPVGASLFAS). Residues 78–102 (NVGSGHFVGLAGSGAAAGLSVTAYE) are Extracellular-facing. Residues 103–123 (LNGLFFVLMLSWIFLPIYITG) traverse the membrane as a helical segment. Residues 124–140 (QVTTMPEYLRKRFGGNR) lie on the Cytoplasmic side of the membrane. A helical membrane pass occupies residues 141–161 (IPIILAVLYLFIYIFTKISVD). The Extracellular portion of the chain corresponds to 162 to 180 (MYAGAIFIQQSLHVNLYLA). Residues 181–201 (IVGLLAVTALYTIAGGLAAVI) form a helical membrane-spanning segment. Topologically, residues 202 to 208 (YTDALQT) are cytoplasmic. A helical transmembrane segment spans residues 209-229 (LIMLIGALILMGYSFAAVGGL). The Extracellular segment spans residues 230-272 (EGLEEKYFLAMASNRSGNSSCGLPREDAFHIFRDPVTSDLPWP). The helical transmembrane segment at 273 to 293 (GILFGMSIPSLWYWCTDQVIV) threads the bilayer. At 294 to 308 (QRTLAAKNLSHAKGG) the chain is on the cytoplasmic side. A helical transmembrane segment spans residues 309–329 (SLMAAYLKVLPLFIMVFPGMV). Topologically, residues 330-374 (SRVLFPDEVACADPEICRKVCSNPAGCSDIAYPKLVLELLPTGLR) are extracellular. The helical transmembrane segment at 375-397 (GLMMAVMVAALTSSLTSIFNSAS) threads the bilayer. Residues 398 to 418 (TIFTMDLWNHLRPRASEKELM) are Cytoplasmic-facing. Residues 419-439 (IVGRVFVLLLVLVSILWIPVV) form a helical membrane-spanning segment. Residues 440 to 446 (QASQGGQ) are Extracellular-facing. Residues 447-467 (LFIYIQSISSYLQPPVAVVFI) form a helical membrane-spanning segment. At 468–479 (MGCFWKRANEKG) the chain is on the cytoplasmic side. A helical membrane pass occupies residues 480 to 500 (AFFGLVLGLLLGLVRLILDFI). The Extracellular segment spans residues 501-521 (YVQPRCDQLDERPAVVKDVHY). The chain crosses the membrane as a helical span at residues 522–542 (LYFSMILSSVTLITVCAVSWF). Residues 543 to 653 (TEPPSKEMVS…SLEENPLVKT (111 aa)) are Cytoplasmic-facing. Residues 567 to 589 (EQVPSATPPPLTLSQNGTPEASG) are disordered. Positions 578-589 (TLSQNGTPEASG) are enriched in polar residues. The helical transmembrane segment at 654–674 (LLDLNLIICISCAIFLWGYFA) threads the bilayer.

This sequence belongs to the sodium:solute symporter (SSF) (TC 2.A.21) family.

The protein localises to the membrane. It localises to the apical cell membrane. It carries out the reaction myo-inositol(out) + 2 Na(+)(out) = myo-inositol(in) + 2 Na(+)(in). The enzyme catalyses 1D-chiro-inositol(out) + 2 Na(+)(out) = 1D-chiro-inositol(in) + 2 Na(+)(in). The catalysed reaction is D-glucose(out) + 2 Na(+)(out) = D-glucose(in) + 2 Na(+)(in). It catalyses the reaction D-xylose(out) + 2 Na(+)(out) = D-xylose(in) + 2 Na(+)(in). MI transport activity inhibited by D-chiro-inositol (DCI), phlorizin (Pz) and sodium (Na(+)). Insulin increases D-chiro-inositol uptake. Its function is as follows. Involved in the sodium-dependent cotransport of myo-inositol (MI) with a Na(+):MI stoichiometry of 2:1. Exclusively responsible for apical MI transport and absorption in intestine. Can also transport D-chiro-inositol (DCI) but not L-fucose. Exhibits stereospecific cotransport of both D-glucose and D-xylose. May induce apoptosis through the TNF-alpha, PDCD1 pathway. May play a role in the regulation of MI concentration in serum, involving reabsorption in at least the proximal tubule of the kidney. In Bos taurus (Bovine), this protein is Sodium/myo-inositol cotransporter 2.